Reading from the N-terminus, the 118-residue chain is uncharacterized protein (118 aa).

The protein belongs to the transposase IS3/IS150/IS904 family.

This is an uncharacterized protein from Haemophilus influenzae (strain ATCC 51907 / DSM 11121 / KW20 / Rd).